The primary structure comprises 66 residues: MSETSNKKLKITQYRSIIGCSKKQKATIKCLGLGRPNYSRVLNDNPLLQGQLRVVQHLVKVEEVSE.

It belongs to the universal ribosomal protein uL30 family. Part of the 50S ribosomal subunit.

In Chloroherpeton thalassium (strain ATCC 35110 / GB-78), this protein is Large ribosomal subunit protein uL30.